The sequence spans 56 residues: uncharacterized protein (56 aa).

A compositionally biased stretch (basic residues) spans H21–P38. The tract at residues H21–H40 is disordered.

This is an uncharacterized protein from Saccharomyces cerevisiae (strain ATCC 204508 / S288c) (Baker's yeast).